The sequence spans 321 residues: Sideroflexin-3 (321 aa).

M1 carries the N-acetylmethionine modification. The next 4 helical transmembrane spans lie at 146-164 (LGTAYVSATTGAVATALGL), 174-194 (LVGRFVPFAAVAAANCINIPL), 225-245 (IFQVVISRIGMAIPAMAIPPV), and 266-286 (LQVGLVGFCLVFATPLCCALF).

It belongs to the sideroflexin family. In terms of tissue distribution, widely expressed.

The protein localises to the mitochondrion membrane. It catalyses the reaction L-serine(in) = L-serine(out). Functionally, mitochondrial serine transporter that mediates transport of serine into mitochondria, an important step of the one-carbon metabolism pathway. Mitochondrial serine is converted to glycine and formate, which then exits to the cytosol where it is used to generate the charged folates that serve as one-carbon donors. This chain is Sideroflexin-3, found in Mus musculus (Mouse).